Reading from the N-terminus, the 244-residue chain is Probable septum site-determining protein MinC (244 aa).

Belongs to the MinC family. Interacts with MinD and FtsZ.

Its function is as follows. Cell division inhibitor that blocks the formation of polar Z ring septums. Rapidly oscillates between the poles of the cell to destabilize FtsZ filaments that have formed before they mature into polar Z rings. Prevents FtsZ polymerization. The sequence is that of Probable septum site-determining protein MinC from Dichelobacter nodosus (strain VCS1703A).